Consider the following 328-residue polypeptide: Arylacetonitrilase (328 aa).

The region spanning 5-278 (VRVAVTQAEP…EGIIYADLDL (274 aa)) is the CN hydrolase domain. Residue Glu-45 is the Proton acceptor of the active site. Lys-125 is a catalytic residue. Cys-160 functions as the Nucleophile in the catalytic mechanism.

This sequence belongs to the carbon-nitrogen hydrolase superfamily. Nitrilase family.

It carries out the reaction a nitrile + 2 H2O = a carboxylate + NH4(+). It catalyses the reaction 4-chlorophenylacetonitrile + 2 H2O = 4-chlorophenylacetate + NH4(+). Functionally, nitrilase that hydrolyzes preferentially phenylacetonitrile and (R,S)-mandelonitrile. Also acts on dinitriles like phenylenediacetonitriles (PDAs) 1,2-PDA, 1,3-PDA, and 1,4-PDA, and cyanophenyl acetonitriles (CPAs) 2-CPA and 4-CPA. The protein is Arylacetonitrilase (nit2) of Aspergillus kawachii (strain NBRC 4308) (White koji mold).